The following is a 176-amino-acid chain: Ribosome rescue factor SmrB (176 aa).

Residues 98-173 (LDLHGLTQKQ…GTAALLLLIE (76 aa)) enclose the Smr domain.

The protein belongs to the SmrB family. Associates with collided ribosomes, but not with correctly translating polysomes.

In terms of biological role, acts as a ribosome collision sensor. Detects stalled/collided disomes (pairs of ribosomes where the leading ribosome is stalled and a second ribosome has collided with it) and endonucleolytically cleaves mRNA at the 5' boundary of the stalled ribosome. Stalled/collided disomes form a new interface (primarily via the 30S subunits) that binds SmrB. Cleaved mRNA becomes available for tmRNA ligation, leading to ribosomal subunit dissociation and rescue of stalled ribosomes. This chain is Ribosome rescue factor SmrB, found in Yersinia pseudotuberculosis serotype O:1b (strain IP 31758).